We begin with the raw amino-acid sequence, 298 residues long: Tyrosine recombinase XerC (298 aa).

Residues 1 to 85 enclose the Core-binding (CB) domain; the sequence is MKPIAAFQEY…SLRSFYRYLT (85 aa). One can recognise a Tyr recombinase domain in the interval 106–291; that stretch reads HLPQFFYEAE…TMAHLKNEYM (186 aa). Active-site residues include arginine 146, lysine 170, histidine 243, arginine 246, and histidine 269. The active-site O-(3'-phospho-DNA)-tyrosine intermediate is tyrosine 278.

Belongs to the 'phage' integrase family. XerC subfamily. Forms a cyclic heterotetrameric complex composed of two molecules of XerC and two molecules of XerD.

It is found in the cytoplasm. Functionally, site-specific tyrosine recombinase, which acts by catalyzing the cutting and rejoining of the recombining DNA molecules. The XerC-XerD complex is essential to convert dimers of the bacterial chromosome into monomers to permit their segregation at cell division. It also contributes to the segregational stability of plasmids. This Lacticaseibacillus paracasei (strain ATCC 334 / BCRC 17002 / CCUG 31169 / CIP 107868 / KCTC 3260 / NRRL B-441) (Lactobacillus paracasei) protein is Tyrosine recombinase XerC.